A 438-amino-acid polypeptide reads, in one-letter code: Aspartate--tRNA(Asp) ligase (438 aa).

E170 contacts L-aspartate. An aspartate region spans residues 192 to 195; that stretch reads QLYK. R214 contacts L-aspartate. Residues 214–216, 222–224, and E361 contribute to the ATP site; these read RAE and RHL. Residues E361 and S364 each coordinate Mg(2+). L-aspartate is bound by residues S364 and R368. 409–412 provides a ligand contact to ATP; the sequence is GAER.

This sequence belongs to the class-II aminoacyl-tRNA synthetase family. Type 2 subfamily. Homodimer. It depends on Mg(2+) as a cofactor.

The protein resides in the cytoplasm. The catalysed reaction is tRNA(Asp) + L-aspartate + ATP = L-aspartyl-tRNA(Asp) + AMP + diphosphate. Functionally, catalyzes the attachment of L-aspartate to tRNA(Asp) in a two-step reaction: L-aspartate is first activated by ATP to form Asp-AMP and then transferred to the acceptor end of tRNA(Asp). This chain is Aspartate--tRNA(Asp) ligase, found in Pyrococcus furiosus (strain ATCC 43587 / DSM 3638 / JCM 8422 / Vc1).